The chain runs to 298 residues: Nitrogenase iron protein (298 aa).

Residue 13-20 coordinates ATP; the sequence is GKGGIGKS. Cysteine 101 serves as a coordination point for [4Fe-4S] cluster. Arginine 104 carries the ADP-ribosylarginine; by dinitrogenase reductase ADP-ribosyltransferase modification. Cysteine 135 is a binding site for [4Fe-4S] cluster.

The protein belongs to the NifH/BchL/ChlL family. As to quaternary structure, homodimer. Requires [4Fe-4S] cluster as cofactor. The reversible ADP-ribosylation of Arg-104 inactivates the nitrogenase reductase and regulates nitrogenase activity.

It carries out the reaction N2 + 8 reduced [2Fe-2S]-[ferredoxin] + 16 ATP + 16 H2O = H2 + 8 oxidized [2Fe-2S]-[ferredoxin] + 2 NH4(+) + 16 ADP + 16 phosphate + 6 H(+). The key enzymatic reactions in nitrogen fixation are catalyzed by the nitrogenase complex, which has 2 components: the iron protein and the molybdenum-iron protein. This Cyanothece sp. (strain PCC 7425 / ATCC 29141) protein is Nitrogenase iron protein.